The primary structure comprises 199 residues: Replication protein (199 aa).

This sequence belongs to the Gram-positive plasmids replication protein type 2 family.

Functionally, is essential for plasmid replication. Nicks the positive strand at the plus origin of replication. This chain is Replication protein (repF), found in Staphylococcus aureus.